We begin with the raw amino-acid sequence, 313 residues long: Homoserine O-succinyltransferase (313 aa).

The active-site Acyl-thioester intermediate is the Cys-142. Substrate contacts are provided by Lys-163 and Ser-192. His-235 functions as the Proton acceptor in the catalytic mechanism. Glu-237 is an active-site residue. Arg-249 is a substrate binding site.

This sequence belongs to the MetA family.

The protein localises to the cytoplasm. It catalyses the reaction L-homoserine + succinyl-CoA = O-succinyl-L-homoserine + CoA. Its pathway is amino-acid biosynthesis; L-methionine biosynthesis via de novo pathway; O-succinyl-L-homoserine from L-homoserine: step 1/1. Its function is as follows. Transfers a succinyl group from succinyl-CoA to L-homoserine, forming succinyl-L-homoserine. This is Homoserine O-succinyltransferase from Vibrio vulnificus (strain CMCP6).